An 88-amino-acid chain; its full sequence is Large ribosomal subunit protein bL27 (88 aa).

The protein belongs to the bacterial ribosomal protein bL27 family.

This Mycobacterium leprae (strain TN) protein is Large ribosomal subunit protein bL27.